Here is a 314-residue protein sequence, read N- to C-terminus: 2-oxo-3-(phosphooxy)propyl 3-oxoalkanoate synthase (314 aa).

The protein belongs to the AfsA family.

The catalysed reaction is a medium-chain 3-oxoacyl-[ACP] + dihydroxyacetone phosphate = a (4-alkanoyl-5-oxo-2,5-dihydrofuran-3-yl)methyl phosphate + holo-[ACP] + H2O. Its function is as follows. Involved of the biosynthesis of S.coelicolor butanolide 1 (SCB1), a gamma-butyrolactone that triggers antibiotic production. This Streptomyces coelicolor (strain ATCC BAA-471 / A3(2) / M145) protein is 2-oxo-3-(phosphooxy)propyl 3-oxoalkanoate synthase.